A 365-amino-acid chain; its full sequence is Alternative oxidase 2, mitochondrial (365 aa).

A compositionally biased stretch (low complexity) spans 32 to 46; sequence TPPHSTTTTSPSSPA. The tract at residues 32–52 is disordered; it reads TPPHSTTTTSPSSPAFHQPNH. Residues Glu166, Glu205, and His208 each contribute to the Fe cation site. The chain crosses the membrane as a helical span at residues 220-242; that stretch reads WFTRSIIYVGQGVFTNVFFLLYL. Glu256, Glu257, Glu312, and His315 together coordinate Fe cation. Positions 345–365 are disordered; sequence QPNHGINVMRPTGWEKQDLQL.

The protein belongs to the alternative oxidase family. It depends on Fe cation as a cofactor.

The protein localises to the mitochondrion inner membrane. In terms of biological role, catalyzes cyanide-resistant oxygen consumption. May increase respiration when the cytochrome respiratory pathway is restricted, or in response to low temperatures. The chain is Alternative oxidase 2, mitochondrial (AOX2) from Candida albicans (Yeast).